Here is a 549-residue protein sequence, read N- to C-terminus: ATP synthase subunit alpha (549 aa).

172–179 is a binding site for ATP; it reads GDRKTGKT. Residues 513–549 are disordered; sequence SSTGESVVPDEHVEAMDEEDLGKESVKVKKPAPQKKK. The span at 540–549 shows a compositional bias: basic residues; it reads VKKPAPQKKK.

Belongs to the ATPase alpha/beta chains family. As to quaternary structure, F-type ATPases have 2 components, CF(1) - the catalytic core - and CF(0) - the membrane proton channel. CF(1) has five subunits: alpha(3), beta(3), gamma(1), delta(1), epsilon(1). CF(0) has three main subunits: a(1), b(2) and c(9-12). The alpha and beta chains form an alternating ring which encloses part of the gamma chain. CF(1) is attached to CF(0) by a central stalk formed by the gamma and epsilon chains, while a peripheral stalk is formed by the delta and b chains.

The protein localises to the cell membrane. It catalyses the reaction ATP + H2O + 4 H(+)(in) = ADP + phosphate + 5 H(+)(out). Produces ATP from ADP in the presence of a proton gradient across the membrane. The alpha chain is a regulatory subunit. The polypeptide is ATP synthase subunit alpha (Mycobacterium ulcerans (strain Agy99)).